The chain runs to 339 residues: Malate dehydrogenase 3, cytoplasmic (339 aa).

NAD(+) is bound by residues 22–23, Asp49, and Gly96; that span reads NI. Arg105 provides a ligand contact to oxaloacetate. Gln119 and Asn138 together coordinate NAD(+). Residues Asn138, Arg169, His194, and Ser249 each coordinate oxaloacetate. His194 acts as the Proton acceptor in catalysis.

The protein belongs to the LDH/MDH superfamily. MDH type 2 family. Expressed in rosette leaves at low levels.

Its subcellular location is the cytoplasm. The catalysed reaction is (S)-malate + NAD(+) = oxaloacetate + NADH + H(+). In terms of biological role, catalyzes a reversible NAD-dependent dehydrogenase reaction involved in central metabolism and redox homeostasis between organelle compartments. This chain is Malate dehydrogenase 3, cytoplasmic, found in Arabidopsis thaliana (Mouse-ear cress).